The primary structure comprises 309 residues: Gamma-hemolysin component A (309 aa).

The signal sequence occupies residues 1–29 (MIKNKILTATLAVGLIAPLANPFIEISKA).

The protein belongs to the aerolysin family. As to quaternary structure, toxicity requires sequential binding and synergistic association of a class S and a class F component which form heterooligomeric complexes. HlgA (class S) associates with HlgB (class F) thus forming an AB toxin in strains producing both gamma-hemolysins and leukocidins. HlgA and LukF-PV can also form a complex.

It localises to the secreted. Functionally, toxin that seems to act by forming pores in the membrane of the cell. Has a hemolytic and a leucotoxic activity. The sequence is that of Gamma-hemolysin component A (hlgA) from Staphylococcus aureus (strain COL).